The following is a 34-amino-acid chain: Photosystem II reaction center protein T (34 aa).

Residues 3–23 (ALVYTFLLVSTLGIIFFAIFF) traverse the membrane as a helical segment.

It belongs to the PsbT family. In terms of assembly, PSII is composed of 1 copy each of membrane proteins PsbA, PsbB, PsbC, PsbD, PsbE, PsbF, PsbH, PsbI, PsbJ, PsbK, PsbL, PsbM, PsbT, PsbY, PsbZ, Psb30/Ycf12, at least 3 peripheral proteins of the oxygen-evolving complex and a large number of cofactors. It forms dimeric complexes.

Its subcellular location is the plastid. The protein resides in the chloroplast thylakoid membrane. Its function is as follows. Found at the monomer-monomer interface of the photosystem II (PS II) dimer, plays a role in assembly and dimerization of PSII. PSII is a light-driven water plastoquinone oxidoreductase, using light energy to abstract electrons from H(2)O, generating a proton gradient subsequently used for ATP formation. This Atropa belladonna (Belladonna) protein is Photosystem II reaction center protein T.